We begin with the raw amino-acid sequence, 474 residues long: uncharacterized protein (474 aa).

Residues 3–23 (LTLWLVLGAVGVGAVGTGVGF) traverse the membrane as a helical segment. The disordered stretch occupies residues 171–296 (VSDGSSSKTR…KETKDRTKVD (126 aa)). Over residues 180–210 (RTPKKTKTSKKKPIKKKSSKSKSSKGSKKQK) the composition is skewed to basic residues. Polar residues predominate over residues 231–253 (TRSQSKQQKGQEQATDQTDSEGV). Over residues 257 to 266 (EGADNTDTEL) the composition is skewed to acidic residues. Residues 267-281 (VETTAETTEQEATTK) are compositionally biased toward low complexity. The segment covering 282 to 296 (STKDTKETKDRTKVD) has biased composition (basic and acidic residues).

It is found in the membrane. This is an uncharacterized protein from Mycoplasma pneumoniae (strain ATCC 29342 / M129 / Subtype 1) (Mycoplasmoides pneumoniae).